The chain runs to 422 residues: Phosphoribosylamine--glycine ligase (422 aa).

An ATP-grasp domain is found at 107-313 (KDLMKKYDIP…LVQVLLDLLD (207 aa)). 133–194 (VQEKGAPIVI…EEYLSGEEFS (62 aa)) is a binding site for ATP. Glu283 and Asn285 together coordinate Mg(2+).

Belongs to the GARS family. The cofactor is Mg(2+). Mn(2+) serves as cofactor.

It catalyses the reaction 5-phospho-beta-D-ribosylamine + glycine + ATP = N(1)-(5-phospho-beta-D-ribosyl)glycinamide + ADP + phosphate + H(+). It functions in the pathway purine metabolism; IMP biosynthesis via de novo pathway; N(1)-(5-phospho-D-ribosyl)glycinamide from 5-phospho-alpha-D-ribose 1-diphosphate: step 2/2. The polypeptide is Phosphoribosylamine--glycine ligase (Bacillus subtilis (strain 168)).